We begin with the raw amino-acid sequence, 108 residues long: UPF0145 protein Tmel_1129 (108 aa).

This sequence belongs to the UPF0145 family.

The polypeptide is UPF0145 protein Tmel_1129 (Thermosipho melanesiensis (strain DSM 12029 / CIP 104789 / BI429)).